The primary structure comprises 670 residues: DEAD-box ATP-dependent RNA helicase 16 (670 aa).

Residues 1-10 (MAAAAAASSM) are compositionally biased toward low complexity. Residues 1-97 (MAAAAAASSM…EEREVSFDEL (97 aa)) are disordered. Composition is skewed to basic and acidic residues over residues 18 to 30 (AATE…HDEA) and 40 to 49 (NDGHTAHAAE). Positions 92-120 (VSFDELGLDEQLKRALRKKGLDKATPIQR) match the Q motif motif. Residues 123–306 (IPLILEGKDV…KLLLHNPFIL (184 aa)) form the Helicase ATP-binding domain. 136–143 (AKTGSGKT) contributes to the ATP binding site. The DEAD box motif lies at 254–257 (DEAD). The region spanning 340–523 (LVLLKLELIQ…PFPLLTKNAV (184 aa)) is the Helicase C-terminal domain. The tract at residues 616-670 (DIDKPRRRKRMGFKGGSGRSSDPLKTFSAEGKSRRRGRKERDGEQDRRKRKKVES) is disordered. The span at 654–670 (KERDGEQDRRKRKKVES) shows a compositional bias: basic and acidic residues.

It belongs to the DEAD box helicase family. DDX56/DBP9 subfamily.

It catalyses the reaction ATP + H2O = ADP + phosphate + H(+). The protein is DEAD-box ATP-dependent RNA helicase 16 of Oryza sativa subsp. japonica (Rice).